The chain runs to 328 residues: Phosphate acyltransferase (328 aa).

The protein belongs to the PlsX family. Homodimer. Probably interacts with PlsY.

The protein localises to the cytoplasm. It catalyses the reaction a fatty acyl-[ACP] + phosphate = an acyl phosphate + holo-[ACP]. It participates in lipid metabolism; phospholipid metabolism. Catalyzes the reversible formation of acyl-phosphate (acyl-PO(4)) from acyl-[acyl-carrier-protein] (acyl-ACP). This enzyme utilizes acyl-ACP as fatty acyl donor, but not acyl-CoA. The sequence is that of Phosphate acyltransferase from Staphylococcus aureus (strain MSSA476).